The chain runs to 410 residues: MNVYLVGGAVRDSLLGLPVTEKDWVVVGATPKEMEANGFRPVGKDFPVFLHPKTQEEYALARTERKSGHGYGGFTFHAASTVSLEEDLIRRDLTINAMAQARGGEIIDPFNGRVDLKARLLRHVSPAFAEDPLRVLRVARFAARYHWLGFQVADDTLMLMKQLSDSGELGYLVAERVWKETSRALMERDPQVFFQVLHRCGALHALFPELAALDGVPQPEQHHPEVDTLLHQFLCLKQAARLGLSLNARYALLCHDLGKGKTPKEEWPRHIAHEIRSARLSKKVSKRLKVPKEAATLATLVAEFHTHSHRALELKPATVWKLFKSLDILRRPERLTDFLGACEADARGRTSFENREYPQASYLQGAADAARQVDIQALQAQGHEGPALGEAIEQARIDAIATFKQQELNP.

ATP contacts are provided by Gly8 and Arg11. CTP contacts are provided by Gly8 and Arg11. Residues Glu21 and Asp23 each contribute to the Mg(2+) site. Residues Arg91, Arg137, and Arg140 each contribute to the ATP site. CTP-binding residues include Arg91, Arg137, and Arg140. An HD domain is found at 228–329 (TLLHQFLCLK…WKLFKSLDIL (102 aa)).

The protein belongs to the tRNA nucleotidyltransferase/poly(A) polymerase family. Bacterial CCA-adding enzyme type 1 subfamily. As to quaternary structure, monomer. Can also form homodimers and oligomers. The cofactor is Mg(2+). It depends on Ni(2+) as a cofactor.

The catalysed reaction is a tRNA precursor + 2 CTP + ATP = a tRNA with a 3' CCA end + 3 diphosphate. The enzyme catalyses a tRNA with a 3' CCA end + 2 CTP + ATP = a tRNA with a 3' CCACCA end + 3 diphosphate. In terms of biological role, catalyzes the addition and repair of the essential 3'-terminal CCA sequence in tRNAs without using a nucleic acid template. Adds these three nucleotides in the order of C, C, and A to the tRNA nucleotide-73, using CTP and ATP as substrates and producing inorganic pyrophosphate. tRNA 3'-terminal CCA addition is required both for tRNA processing and repair. Also involved in tRNA surveillance by mediating tandem CCA addition to generate a CCACCA at the 3' terminus of unstable tRNAs. While stable tRNAs receive only 3'-terminal CCA, unstable tRNAs are marked with CCACCA and rapidly degraded. The polypeptide is Multifunctional CCA protein (Alcanivorax borkumensis (strain ATCC 700651 / DSM 11573 / NCIMB 13689 / SK2)).